Reading from the N-terminus, the 101-residue chain is Replication restart protein PriB (101 aa).

The region spanning 1 to 101 (MTTNNLVLSG…IHAENVELKT (101 aa)) is the SSB domain.

The protein belongs to the PriB family. In terms of assembly, homodimer. Interacts with PriA and DnaT. Component of the replication restart primosome. Primosome assembly occurs via a 'hand-off' mechanism. PriA binds to replication forks, subsequently PriB then DnaT bind; DnaT then displaces ssDNA to generate the helicase loading substrate.

Its function is as follows. Involved in the restart of stalled replication forks, which reloads the replicative helicase on sites other than the origin of replication; the PriA-PriB pathway is the major replication restart pathway. During primosome assembly it facilitates complex formation between PriA and DnaT on DNA; stabilizes PriA on DNA. Stimulates the DNA unwinding activity of PriA helicase. This chain is Replication restart protein PriB, found in Shewanella oneidensis (strain ATCC 700550 / JCM 31522 / CIP 106686 / LMG 19005 / NCIMB 14063 / MR-1).